We begin with the raw amino-acid sequence, 215 residues long: Phosphatidylserine decarboxylase proenzyme (215 aa).

Ser181 acts as the Schiff-base intermediate with substrate; via pyruvic acid in catalysis. A Pyruvic acid (Ser); by autocatalysis modification is found at Ser181.

The protein belongs to the phosphatidylserine decarboxylase family. PSD-A subfamily. Heterodimer of a large membrane-associated beta subunit and a small pyruvoyl-containing alpha subunit. The cofactor is pyruvate. In terms of processing, is synthesized initially as an inactive proenzyme. Formation of the active enzyme involves a self-maturation process in which the active site pyruvoyl group is generated from an internal serine residue via an autocatalytic post-translational modification. Two non-identical subunits are generated from the proenzyme in this reaction, and the pyruvate is formed at the N-terminus of the alpha chain, which is derived from the carboxyl end of the proenzyme. The post-translation cleavage follows an unusual pathway, termed non-hydrolytic serinolysis, in which the side chain hydroxyl group of the serine supplies its oxygen atom to form the C-terminus of the beta chain, while the remainder of the serine residue undergoes an oxidative deamination to produce ammonia and the pyruvoyl prosthetic group on the alpha chain.

The protein resides in the cell membrane. The catalysed reaction is a 1,2-diacyl-sn-glycero-3-phospho-L-serine + H(+) = a 1,2-diacyl-sn-glycero-3-phosphoethanolamine + CO2. It participates in phospholipid metabolism; phosphatidylethanolamine biosynthesis; phosphatidylethanolamine from CDP-diacylglycerol: step 2/2. In terms of biological role, catalyzes the formation of phosphatidylethanolamine (PtdEtn) from phosphatidylserine (PtdSer). The polypeptide is Phosphatidylserine decarboxylase proenzyme (Polynucleobacter asymbioticus (strain DSM 18221 / CIP 109841 / QLW-P1DMWA-1) (Polynucleobacter necessarius subsp. asymbioticus)).